The chain runs to 148 residues: Protein ORM1 (148 aa).

Transmembrane regions (helical) follow at residues 12–32 (WIIH…FPGV), 36–56 (WSWT…FHLI), 89–109 (FLII…HYDL), and 111–131 (MFSW…LPVT).

To yeast YLR350W C-terminus.

It localises to the membrane. The polypeptide is Protein ORM1 (ORM1) (Saccharomyces pastorianus (strain ATCC 76670 / Carlsberg bottom yeast no.2 / CBS 1503 / CLIB 180 / NBRC 10610 / NRRL Y-1525) (Saaz-type lager yeast)).